A 267-amino-acid chain; its full sequence is Tryptophan synthase alpha chain (267 aa).

Active-site proton acceptor residues include Glu-47 and Asp-58.

The protein belongs to the TrpA family. As to quaternary structure, tetramer of two alpha and two beta chains.

The catalysed reaction is (1S,2R)-1-C-(indol-3-yl)glycerol 3-phosphate + L-serine = D-glyceraldehyde 3-phosphate + L-tryptophan + H2O. The protein operates within amino-acid biosynthesis; L-tryptophan biosynthesis; L-tryptophan from chorismate: step 5/5. In terms of biological role, the alpha subunit is responsible for the aldol cleavage of indoleglycerol phosphate to indole and glyceraldehyde 3-phosphate. This chain is Tryptophan synthase alpha chain, found in Chlorobium limicola (strain DSM 245 / NBRC 103803 / 6330).